The following is a 338-amino-acid chain: Methionine import ATP-binding protein MetN 2 (338 aa).

Residues 2 to 242 (IQLEGVSVDF…PQHAFTRQLV (241 aa)) form the ABC transporter domain. Position 39 to 46 (39 to 46 (GTSGAGKS)) interacts with ATP.

This sequence belongs to the ABC transporter superfamily. Methionine importer (TC 3.A.1.24) family. In terms of assembly, the complex is composed of two ATP-binding proteins (MetN), two transmembrane proteins (MetI) and a solute-binding protein (MetQ).

It localises to the cell inner membrane. It carries out the reaction L-methionine(out) + ATP + H2O = L-methionine(in) + ADP + phosphate + H(+). The enzyme catalyses D-methionine(out) + ATP + H2O = D-methionine(in) + ADP + phosphate + H(+). Part of the ABC transporter complex MetNIQ involved in methionine import. Responsible for energy coupling to the transport system. This is Methionine import ATP-binding protein MetN 2 from Pectobacterium atrosepticum (strain SCRI 1043 / ATCC BAA-672) (Erwinia carotovora subsp. atroseptica).